Here is a 1035-residue protein sequence, read N- to C-terminus: GRB10-interacting GYF protein 1 (1035 aa).

4 positions are modified to phosphoserine: Ser24, Ser28, Ser137, and Ser157. The tract at residues 105 to 422 (KGAGPPLAGT…AGPPGDLEDD (318 aa)) is disordered. 2 stretches are compositionally biased toward basic and acidic residues: residues 148 to 179 (SPRE…RCGF) and 186 to 203 (PRKE…SLRE). At Ser230 the chain carries Phosphoserine. Basic and acidic residues predominate over residues 239–267 (GWREHGERRRKFEFDLRGDRGGCGEEEGR). Acidic residues-rich tracts occupy residues 295–304 (CLDDEDEEMG) and 324–349 (PEEQ…EEGP). Residue Ser341 is modified to Phosphoserine. Low complexity predominate over residues 367-378 (SSPSPLPTLGPL). A compositionally biased stretch (basic and acidic residues) spans 388-401 (TAEKEPPAAEDDIR). Residue Ser406 is modified to Phosphoserine. Positions 406–417 (SPGVGSSAGPPG) are enriched in low complexity. The GYF domain occupies 474 to 522 (ARKWFYKDPQGEIQGPFTTQEMAEWFQAGYFSMSLLVKRGCDEGFQPLG). A phosphoserine mark is found at Ser538 and Ser638. Disordered stretches follow at residues 621 to 640 (PPRG…LSVP), 696 to 724 (KREE…QEEE), and 825 to 879 (WGGP…RPIR). The segment covering 629 to 639 (LLPTMSRSLSV) has biased composition (polar residues). Positions 696–722 (KREEEERKRREEKRRQQQQEEQKRRQE) are enriched in basic and acidic residues. Over residues 857-874 (LKNSRSSPSLSDSYSHLS) the composition is skewed to low complexity. Ser862 carries the post-translational modification Phosphoserine.

This sequence belongs to the GIGYF family. In terms of assembly, interacts with GRB10. This transient binding is increased under IGF1 stimulation and leads to recruitment of GIGYF1/GRB10 complex to IGF1 receptor. Interacts with DDX6.

May act cooperatively with GRB10 to regulate tyrosine kinase receptor signaling. May increase IGF1 receptor phosphorylation under IGF1 stimulation as well as phosphorylation of IRS1 and SHC1. This Homo sapiens (Human) protein is GRB10-interacting GYF protein 1 (GIGYF1).